Reading from the N-terminus, the 141-residue chain is ATP synthase F(0) complex subunit C2, mitochondrial (141 aa).

A mitochondrion-targeting transit peptide spans M1 to R66. A helical membrane pass occupies residues V82–Y102. N6,N6,N6-trimethyllysine is present on K109. A helical transmembrane segment spans residues I117–I137.

Belongs to the ATPase C chain family. F-type ATPases have 2 components, CF(1) - the catalytic core - and CF(0) - the membrane proton channel. CF(1) has five subunits: alpha(3), beta(3), gamma(1), delta(1), epsilon(1). CF(0) has three main subunits: a, b and c. Interacts with DNAJC30; interaction is direct. Post-translationally, trimethylated by ATPSCKMT at Lys-109. Methylation is required for proper incorporation of the C subunit into the ATP synthase complex and mitochondrial respiration.

The protein localises to the mitochondrion membrane. In terms of biological role, mitochondrial membrane ATP synthase (F(1)F(0) ATP synthase or Complex V) produces ATP from ADP in the presence of a proton gradient across the membrane which is generated by electron transport complexes of the respiratory chain. F-type ATPases consist of two structural domains, F(1) - containing the extramembraneous catalytic core and F(0) - containing the membrane proton channel, linked together by a central stalk and a peripheral stalk. During catalysis, ATP synthesis in the catalytic domain of F(1) is coupled via a rotary mechanism of the central stalk subunits to proton translocation. Part of the complex F(0) domain. A homomeric c-ring of probably 10 subunits is part of the complex rotary element. The protein is ATP synthase F(0) complex subunit C2, mitochondrial of Pongo abelii (Sumatran orangutan).